The following is a 608-amino-acid chain: MRVLYIHAERFSWDPRDPALDIRDEPVSGSASNALVVFVSVERGDSPDEGFLKAVAADVVETAKKVGASSIVVYPYAHLSTDLARPYTAREVVGKLYEVVKAQFKGQVLKAPFGYYKAFELKCLGHPLSELSRVFKPEEAKTEKRAEERRDYYVVLTPDGAEYDPAKFNYAGLDDFKALVEKEVFKRELGGGEPKYLDYLRKFGFEWEPMSDVGHMRYAPEATVMMELVEDYAYMVAKSLGIPVFKIRGTNMFKLSEYAIESHARLFGERLYVVESDTDLILRYAACFQQFAMVKDWVISYRHLPFGLLEIADSYRHEQPGETVLLFRLRRFYMPDLHIFTKDLKEAMEVTFKLHEVIFREIGKLGRTYVSLYNVTEDFYKGHREYLVELARREGKPILVRILPGQKYYWVLNVEFHIVDELGRPREIATFQIDVGNAQRFGIKYVDENNQVRYPVIIHTAILGSVERYLYAVFDTMAKMEKEGKTPRLPTWLSPVQTRVIPVSKENLKYAMAVADLLEAEGIRVDVDDREETLSKKIRDAETAWVPYIIVVGSKEEAEGTVTVRERGGGQYKAKAEELAKKIREEVKGYPQRPLYLPRLLSQRPSRH.

Residues 1–143 form an editing domain region; the sequence is MRVLYIHAER…VFKPEEAKTE (143 aa). Catalytic regions lie at residues 194 to 490 and 195 to 490; these read PKYL…PRLP and KYLD…PRLP. Zn(2+) is bound by residues Cys287, His338, and His459.

It belongs to the class-II aminoacyl-tRNA synthetase family. Homodimer. The cofactor is Zn(2+).

Its subcellular location is the cytoplasm. It carries out the reaction tRNA(Thr) + L-threonine + ATP = L-threonyl-tRNA(Thr) + AMP + diphosphate + H(+). Its function is as follows. Catalyzes the attachment of threonine to tRNA(Thr) in a two-step reaction: L-threonine is first activated by ATP to form Thr-AMP and then transferred to the acceptor end of tRNA(Thr). Also edits incorrectly charged L-seryl-tRNA(Thr). The protein is Threonine--tRNA ligase of Pyrobaculum arsenaticum (strain DSM 13514 / JCM 11321 / PZ6).